The sequence spans 502 residues: Hexokinase-2 (502 aa).

Residues 4–24 (VAVATTVVCSVAVCAAAALIV) traverse the membrane as a helical segment. Residues 35 to 487 (ARVIEILKAF…SGVGAALLAA (453 aa)) enclose the Hexokinase domain. A hexokinase small subdomain region spans residues 90-228 (SGDETGFFYA…GLDMLVAALV (139 aa)). Residues G104, T105, and N106 each contribute to the ADP site. The D-glucose site is built by T194, K195, N229, and D230. The tract at residues 229-476 (NDTIGTLAGG…ESVEVILSND (248 aa)) is hexokinase large subdomain. T253 contacts ADP. Positions 256, 284, and 315 each coordinate D-glucose. Position 441 (G441) interacts with ADP.

Belongs to the hexokinase family. Highly expressed in siliques, at intermediate levels in roots and flowers, and at lower levels in stems, rosette and cauline leaves.

It localises to the mitochondrion outer membrane. It catalyses the reaction a D-hexose + ATP = a D-hexose 6-phosphate + ADP + H(+). The enzyme catalyses D-fructose + ATP = D-fructose 6-phosphate + ADP + H(+). It carries out the reaction D-glucose + ATP = D-glucose 6-phosphate + ADP + H(+). The protein operates within carbohydrate metabolism; hexose metabolism. It functions in the pathway carbohydrate degradation; glycolysis; D-glyceraldehyde 3-phosphate and glycerone phosphate from D-glucose: step 1/4. Its function is as follows. Fructose and glucose phosphorylating enzyme. May be involved in the phosphorylation of glucose during the export from mitochondrion to cytosol. Acts as a sugar sensor which may regulate sugar-dependent gene repression or activation. Mediates the effects of sugar on plant growth and development independently of its catalytic activity or the sugar metabolism. May regulate the execution of program cell death in plant cells. This is Hexokinase-2 (HXK2) from Arabidopsis thaliana (Mouse-ear cress).